Reading from the N-terminus, the 702-residue chain is Lipase maturation factor 2 (702 aa).

The next 10 helical transmembrane spans lie at 10-30, 75-95, 102-122, 123-143, 164-184, 226-246, 259-279, 316-336, 363-383, and 396-416; these read LFLQGVAAVYLFAFASLYTQI, AQGLDLLTLLGTVLALGALLL, FIYLLLWAAYLSACQVGQVFL, YFQWDSLLLETGFLAILVAPL, DLPFWLVRWLLFRLMFASGVV, LSVVATFLIEIAVPPLFFAPI, LLQILIIITGNYNFFNLLTLV, LMLELTVYGLLAYGTIYYFGL, VTLPTVWLGTASLAWELLIAL, and FFAGIQLSVLGTATVFLFLIS. Residue Asn-488 is glycosylated (N-linked (GlcNAc...) asparagine). Residues 628–648 traverse the membrane as a helical segment; it reads QLSPLEPSILLWGLLGAVVAI. Residues 660-702 are disordered; it reads LQSSKQTREEKRKQAPKKDSRAVSEQTAPNSNSNGSWAPRRKK. Over residues 665-681 the composition is skewed to basic and acidic residues; that stretch reads QTREEKRKQAPKKDSRA. Over residues 682-695 the composition is skewed to polar residues; sequence VSEQTAPNSNSNGS.

The protein belongs to the lipase maturation factor family.

The protein resides in the endoplasmic reticulum membrane. In terms of biological role, involved in the maturation of specific proteins in the endoplasmic reticulum. May be required for maturation and transport of active lipoprotein lipase (LPL) through the secretory pathway. This Rattus norvegicus (Rat) protein is Lipase maturation factor 2 (Lmf2).